Here is a 166-residue protein sequence, read N- to C-terminus: NAD(P)H-quinone oxidoreductase subunit I, chloroplastic (166 aa).

2 4Fe-4S ferredoxin-type domains span residues 55–84 (GRIHFEFDKCIACEVCVRVCPIDLPVVDWK) and 95–124 (LNYSIDFGICIFCGNCVEYCPTNCLSMTEE). Residues C64, C67, C70, C74, C104, C107, C110, and C114 each contribute to the [4Fe-4S] cluster site.

This sequence belongs to the complex I 23 kDa subunit family. As to quaternary structure, NDH is composed of at least 16 different subunits, 5 of which are encoded in the nucleus. [4Fe-4S] cluster is required as a cofactor.

The protein resides in the plastid. It is found in the chloroplast thylakoid membrane. The catalysed reaction is a plastoquinone + NADH + (n+1) H(+)(in) = a plastoquinol + NAD(+) + n H(+)(out). It carries out the reaction a plastoquinone + NADPH + (n+1) H(+)(in) = a plastoquinol + NADP(+) + n H(+)(out). NDH shuttles electrons from NAD(P)H:plastoquinone, via FMN and iron-sulfur (Fe-S) centers, to quinones in the photosynthetic chain and possibly in a chloroplast respiratory chain. The immediate electron acceptor for the enzyme in this species is believed to be plastoquinone. Couples the redox reaction to proton translocation, and thus conserves the redox energy in a proton gradient. This Hulsea algida (Pacific hulsea) protein is NAD(P)H-quinone oxidoreductase subunit I, chloroplastic.